Here is a 388-residue protein sequence, read N- to C-terminus: Alanine racemase 2 (388 aa).

Catalysis depends on K39, which acts as the Proton acceptor; specific for D-alanine. Position 39 is an N6-(pyridoxal phosphate)lysine (K39). Residue R137 participates in substrate binding. The active-site Proton acceptor; specific for L-alanine is Y267. Residue M315 coordinates substrate.

It belongs to the alanine racemase family. The cofactor is pyridoxal 5'-phosphate.

It carries out the reaction L-alanine = D-alanine. Its pathway is amino-acid biosynthesis; D-alanine biosynthesis; D-alanine from L-alanine: step 1/1. Its function is as follows. Catalyzes the interconversion of L-alanine and D-alanine. May also act on other amino acids. In Caldanaerobacter subterraneus subsp. tengcongensis (strain DSM 15242 / JCM 11007 / NBRC 100824 / MB4) (Thermoanaerobacter tengcongensis), this protein is Alanine racemase 2 (alr2).